Reading from the N-terminus, the 245-residue chain is Ribosome maturation factor RimP (245 aa).

The protein belongs to the RimP family.

Its subcellular location is the cytoplasm. Functionally, required for maturation of 30S ribosomal subunits. The sequence is that of Ribosome maturation factor RimP from Verminephrobacter eiseniae (strain EF01-2).